A 340-amino-acid polypeptide reads, in one-letter code: Complement decay-accelerating factor (340 aa).

Sushi domains lie at 1-55, 56-119, 120-181, and 182-244; these read VPNA…FCNR, SCEV…FCKK, KSCP…ECRE, and IYCP…ECRG. Residues C24 and C53 are joined by a disulfide bond. N54 carries N-linked (GlcNAc...) asparagine glycosylation. 6 disulfide bridges follow: C57–C104, C88–C117, C122–C163, C149–C179, C184–C226, and C212–C242. An N-linked (GlcNAc...) asparagine glycan is attached at N107. Residues 235–317 form a disordered region; it reads WSGPPPECRG…SGTTSGTTSL (83 aa). Polar residues predominate over residues 246–268; it reads SLTSKVPPTVQKPTTVNVPTTEV. Composition is skewed to low complexity over residues 269-287 and 307-317; these read SPTS…AQAT and GSGTTSGTTSL. A lipid anchor (GPI-anchor amidated serine) is attached at S312. The propeptide at 313–340 is removed in mature form; it reads GTTSLLSGHKCFTLTGLLGTLVTMGLLT.

It belongs to the receptors of complement activation (RCA) family. In terms of assembly, monomer (major form) and non-disulfide-linked, covalent homodimer (minor form). Interacts with ADGRE5. The Ser/Thr-rich domain is heavily O-glycosylated.

The protein resides in the cell membrane. This protein recognizes C4b and C3b fragments that condense with cell-surface hydroxyl or amino groups when nascent C4b and C3b are locally generated during C4 and c3 activation. Interaction of daf with cell-associated C4b and C3b polypeptides interferes with their ability to catalyze the conversion of C2 and factor B to enzymatically active C2a and Bb and thereby prevents the formation of C4b2a and C3bBb, the amplification convertases of the complement cascade. Inhibits complement activation by destabilizing and preventing the formation of C3 and C5 convertases, which prevents complement damage. This is Complement decay-accelerating factor (CD55) from Pongo pygmaeus (Bornean orangutan).